The following is a 185-amino-acid chain: Photosystem I assembly protein Ycf4 (185 aa).

The next 3 helical transmembrane spans lie at 22 to 42, 57 to 77, and 101 to 121; these read FFFA…GFSS, ILFV…LFFS, and FYVF…LRVP.

Belongs to the Ycf4 family.

It localises to the plastid. The protein resides in the chloroplast thylakoid membrane. Seems to be required for the assembly of the photosystem I complex. This Gnetum parvifolium (Small-leaved jointfir) protein is Photosystem I assembly protein Ycf4.